We begin with the raw amino-acid sequence, 583 residues long: Sensor protein SrrB (583 aa).

At Met-1–Lys-11 the chain is on the cytoplasmic side. Residues Leu-12–Ile-32 traverse the membrane as a helical segment. Residues Thr-33 to Thr-174 lie on the Extracellular side of the membrane. The chain crosses the membrane as a helical span at residues Ile-175–Leu-195. Residues Ser-196 to Glu-583 are Cytoplasmic-facing. The HAMP domain occupies Ser-197–Asp-249. Positions Asn-366 to Glu-583 constitute a Histidine kinase domain. The residue at position 369 (His-369) is a Phosphohistidine; by autocatalysis.

It is found in the cell membrane. It carries out the reaction ATP + protein L-histidine = ADP + protein N-phospho-L-histidine.. Its function is as follows. Member of the two-component regulatory system SrrA/SrrB, which is involved in the global regulation of staphylococcal virulence factors in response to environmental oxygen levels as well as biofilm formation. Also plays an essential role in host-derived nitric oxide resistance by regulating hmp/flavohemoglobin, an enzyme that detoxifies nitric oxide by converting it to nitrate. Functions as a sensor protein kinase which is autophosphorylated at a histidine residue and transfers its phosphate group to SrrA. In turn, SrrA binds to the upstream promoter regions of the target genes to positively and negatively regulate their expression. This Staphylococcus aureus (strain MW2) protein is Sensor protein SrrB (srrB).